The primary structure comprises 151 residues: MMTLTFASPPQNKSDLETGPAFTPRFDEKGLITAVVTDAGDGALLMVAHMNAEALALTLETGVAHYYSRSRRRLWKKGESSGNVQAVREIRTDCDQDAIWLKVSVAGHDATCHTGRRSCFYRTVGVDEGQAKLVITDDERHFDLKQVYAES.

Polar residues predominate over residues 1-13; it reads MMTLTFASPPQNK. Residues 1 to 20 are disordered; that stretch reads MMTLTFASPPQNKSDLETGP. Asp93 provides a ligand contact to Mg(2+). Cys94 serves as a coordination point for Zn(2+). Positions 95 and 97 each coordinate Mg(2+). Residues Cys112 and Cys119 each coordinate Zn(2+).

The protein belongs to the PRA-CH family. In terms of assembly, homodimer. It depends on Mg(2+) as a cofactor. The cofactor is Zn(2+).

It localises to the cytoplasm. The catalysed reaction is 1-(5-phospho-beta-D-ribosyl)-5'-AMP + H2O = 1-(5-phospho-beta-D-ribosyl)-5-[(5-phospho-beta-D-ribosylamino)methylideneamino]imidazole-4-carboxamide. It functions in the pathway amino-acid biosynthesis; L-histidine biosynthesis; L-histidine from 5-phospho-alpha-D-ribose 1-diphosphate: step 3/9. Catalyzes the hydrolysis of the adenine ring of phosphoribosyl-AMP. The polypeptide is Phosphoribosyl-AMP cyclohydrolase (Sinorhizobium medicae (strain WSM419) (Ensifer medicae)).